The following is a 114-amino-acid chain: uncharacterized protein (114 aa).

Residues 18-29 (TRKRNSHKKVTK) are compositionally biased toward basic residues. Disordered regions lie at residues 18–47 (TRKR…RRTG) and 65–108 (SRPR…KLLN). The segment covering 30–41 (RAVEKRKQDSTR) has biased composition (basic and acidic residues).

This is an uncharacterized protein from Homo sapiens (Human).